We begin with the raw amino-acid sequence, 468 residues long: Nuclear pore complex protein Nup50 (468 aa).

The span at 1–16 (MAKRNAEKELTDRNWD) shows a compositional bias: basic and acidic residues. Residues 1–26 (MAKRNAEKELTDRNWDQEDEAEEVGT) form a disordered region. Residue Ala2 is modified to N-acetylalanine. Position 8 is an N6-acetyllysine (Lys8). The residue at position 52 (Ser52) is a Phosphoserine. The stretch at 76 to 77 (FG) is repeat 1. Positions 76–304 (FGSGAGGKPL…FSPGNSSLFG (229 aa)) are 5 X 2 AA repeats of F-G. Lys83 is modified (N6-acetyllysine). Copy 2 of the repeat occupies 113–114 (FG). Disordered stretches follow at residues 122-148 (TTLV…LASS) and 201-224 (HGNS…SPSL). At Lys127 the chain carries N6-acetyllysine. Residues 137–148 (SQQPSSSGLASS) show a composition bias toward low complexity. The tract at residues 144 to 206 (GLASSKACVG…IEQQHGNSGR (63 aa)) is binding to CDKN1B. Phosphoserine occurs at positions 208 and 221. Repeat unit 3 spans residues 225 to 226 (FG). Ser234 bears the Phosphoserine mark. The tract at residues 238–269 (FHGNKTEDTPDKKMEVASEKKTDPSSLGATSA) is disordered. Basic and acidic residues predominate over residues 241–260 (NKTEDTPDKKMEVASEKKTD). A phosphothreonine mark is found at Thr246 and Thr259. Ser270 carries the phosphoserine modification. The stretch at 273–274 (FG) is repeat 4. Ser296 is modified (phosphoserine). Copy 5 of the repeat occupies 303-304 (FG). Residues 304–317 (GKDTTQSKPVSSPF) are compositionally biased toward polar residues. The disordered stretch occupies residues 304-345 (GKDTTQSKPVSSPFPTKPLEGQAEGDSGECKGGDEEENDEPP). The 134-residue stretch at 335–468 (GGDEEENDEP…HKILLEKKDA (134 aa)) folds into the RanBD1 domain. Lys353 participates in a covalent cross-link: Glycyl lysine isopeptide (Lys-Gly) (interchain with G-Cter in SUMO2). Lys450 carries the post-translational modification N6-acetyllysine.

Interacts with Importin alpha-2, Importin beta, Importin beta-2, NUP153, Ran binding protein 7, CDKN1B and itself. Does not interact with TPR. As to expression, ubiquitous. Highest levels in testis, peripheral blood leukocytes and fetal liver.

It is found in the nucleus. It localises to the nuclear pore complex. The protein resides in the nucleus membrane. Functionally, component of the nuclear pore complex that has a direct role in nuclear protein import. Actively displaces NLSs from importin-alpha, and facilitates disassembly of the importin-alpha:beta-cargo complex and importin recycling. Interacts with regulatory proteins of cell cycle progression including CDKN1B. This interaction is required for correct intracellular transport and degradation of CDKN1B. The chain is Nuclear pore complex protein Nup50 (NUP50) from Homo sapiens (Human).